Reading from the N-terminus, the 180-residue chain is Large ribosomal subunit protein uL6 (180 aa).

Belongs to the universal ribosomal protein uL6 family. Part of the 50S ribosomal subunit.

In terms of biological role, this protein binds to the 23S rRNA, and is important in its secondary structure. It is located near the subunit interface in the base of the L7/L12 stalk, and near the tRNA binding site of the peptidyltransferase center. The polypeptide is Large ribosomal subunit protein uL6 (Salinispora tropica (strain ATCC BAA-916 / DSM 44818 / JCM 13857 / NBRC 105044 / CNB-440)).